We begin with the raw amino-acid sequence, 507 residues long: Probable cytosol aminopeptidase (507 aa).

Mn(2+) is bound by residues Lys271 and Asp276. Lys283 is a catalytic residue. The Mn(2+) site is built by Asp294, Asp353, and Glu355. Arg357 is a catalytic residue.

The protein belongs to the peptidase M17 family. It depends on Mn(2+) as a cofactor.

The protein localises to the cytoplasm. It carries out the reaction Release of an N-terminal amino acid, Xaa-|-Yaa-, in which Xaa is preferably Leu, but may be other amino acids including Pro although not Arg or Lys, and Yaa may be Pro. Amino acid amides and methyl esters are also readily hydrolyzed, but rates on arylamides are exceedingly low.. It catalyses the reaction Release of an N-terminal amino acid, preferentially leucine, but not glutamic or aspartic acids.. In terms of biological role, presumably involved in the processing and regular turnover of intracellular proteins. Catalyzes the removal of unsubstituted N-terminal amino acids from various peptides. This Nitratidesulfovibrio vulgaris (strain ATCC 29579 / DSM 644 / CCUG 34227 / NCIMB 8303 / VKM B-1760 / Hildenborough) (Desulfovibrio vulgaris) protein is Probable cytosol aminopeptidase.